A 185-amino-acid chain; its full sequence is Ribosome-recycling factor (185 aa).

It belongs to the RRF family.

The protein resides in the cytoplasm. In terms of biological role, responsible for the release of ribosomes from messenger RNA at the termination of protein biosynthesis. May increase the efficiency of translation by recycling ribosomes from one round of translation to another. The polypeptide is Ribosome-recycling factor (Pseudomonas entomophila (strain L48)).